The sequence spans 330 residues: Glycerol-3-phosphate dehydrogenase [NAD(P)+] 1 (330 aa).

NADPH-binding residues include tryptophan 15, arginine 35, and lysine 105. Residues lysine 105, glycine 133, and threonine 135 each contribute to the sn-glycerol 3-phosphate site. Alanine 137 provides a ligand contact to NADPH. Sn-glycerol 3-phosphate-binding residues include lysine 188, aspartate 241, serine 251, arginine 252, and asparagine 253. The Proton acceptor role is filled by lysine 188. NADPH is bound at residue arginine 252. NADPH is bound by residues isoleucine 276 and glutamate 278.

This sequence belongs to the NAD-dependent glycerol-3-phosphate dehydrogenase family.

It localises to the cytoplasm. The enzyme catalyses sn-glycerol 3-phosphate + NAD(+) = dihydroxyacetone phosphate + NADH + H(+). The catalysed reaction is sn-glycerol 3-phosphate + NADP(+) = dihydroxyacetone phosphate + NADPH + H(+). It functions in the pathway membrane lipid metabolism; glycerophospholipid metabolism. In terms of biological role, catalyzes the reduction of the glycolytic intermediate dihydroxyacetone phosphate (DHAP) to sn-glycerol 3-phosphate (G3P), the key precursor for phospholipid synthesis. This chain is Glycerol-3-phosphate dehydrogenase [NAD(P)+] 1, found in Sphingopyxis alaskensis (strain DSM 13593 / LMG 18877 / RB2256) (Sphingomonas alaskensis).